A 279-amino-acid polypeptide reads, in one-letter code: Tryptophan synthase alpha chain (279 aa).

Catalysis depends on proton acceptor residues Glu-50 and Asp-61.

This sequence belongs to the TrpA family. In terms of assembly, tetramer of two alpha and two beta chains.

The enzyme catalyses (1S,2R)-1-C-(indol-3-yl)glycerol 3-phosphate + L-serine = D-glyceraldehyde 3-phosphate + L-tryptophan + H2O. It participates in amino-acid biosynthesis; L-tryptophan biosynthesis; L-tryptophan from chorismate: step 5/5. In terms of biological role, the alpha subunit is responsible for the aldol cleavage of indoleglycerol phosphate to indole and glyceraldehyde 3-phosphate. The chain is Tryptophan synthase alpha chain from Brucella anthropi (strain ATCC 49188 / DSM 6882 / CCUG 24695 / JCM 21032 / LMG 3331 / NBRC 15819 / NCTC 12168 / Alc 37) (Ochrobactrum anthropi).